A 147-amino-acid chain; its full sequence is Small ribosomal subunit protein uS5 (147 aa).

An S5 DRBM domain is found at 9-72; that stretch reads FEEVIVDIGR…DDAFKNIVEV (64 aa).

This sequence belongs to the universal ribosomal protein uS5 family. In terms of assembly, part of the 30S ribosomal subunit. Contacts proteins S4 and S8.

Functionally, with S4 and S12 plays an important role in translational accuracy. In terms of biological role, located at the back of the 30S subunit body where it stabilizes the conformation of the head with respect to the body. The chain is Small ribosomal subunit protein uS5 from Campylobacter fetus subsp. fetus (strain 82-40).